We begin with the raw amino-acid sequence, 393 residues long: tRNA(Met) cytidine acetate ligase (393 aa).

Positions 81, 142, and 167 each coordinate ATP.

The protein belongs to the TmcAL family.

It is found in the cytoplasm. It carries out the reaction cytidine(34) in elongator tRNA(Met) + acetate + ATP = N(4)-acetylcytidine(34) in elongator tRNA(Met) + AMP + diphosphate. Functionally, catalyzes the formation of N(4)-acetylcytidine (ac(4)C) at the wobble position of elongator tRNA(Met), using acetate and ATP as substrates. First activates an acetate ion to form acetyladenylate (Ac-AMP) and then transfers the acetyl group to tRNA to form ac(4)C34. The protein is tRNA(Met) cytidine acetate ligase of Bacillus cereus (strain AH820).